The following is a 357-amino-acid chain: Phosphoribosylformylglycinamidine cyclo-ligase (357 aa).

This sequence belongs to the AIR synthase family.

The protein localises to the cytoplasm. The catalysed reaction is 2-formamido-N(1)-(5-O-phospho-beta-D-ribosyl)acetamidine + ATP = 5-amino-1-(5-phospho-beta-D-ribosyl)imidazole + ADP + phosphate + H(+). The protein operates within purine metabolism; IMP biosynthesis via de novo pathway; 5-amino-1-(5-phospho-D-ribosyl)imidazole from N(2)-formyl-N(1)-(5-phospho-D-ribosyl)glycinamide: step 2/2. The sequence is that of Phosphoribosylformylglycinamidine cyclo-ligase from Nitrobacter winogradskyi (strain ATCC 25391 / DSM 10237 / CIP 104748 / NCIMB 11846 / Nb-255).